The primary structure comprises 261 residues: Small ribosomal subunit protein eS1A (261 aa).

The segment covering 1 to 18 (MTLGKNKRISKGGKRGKK) has biased composition (basic residues). Residues 1–23 (MTLGKNKRISKGGKRGKKKTQET) form a disordered region.

The protein belongs to the eukaryotic ribosomal protein eS1 family. As to quaternary structure, component of the small ribosomal subunit. Mature ribosomes consist of a small (40S) and a large (60S) subunit. The 40S subunit contains about 33 different proteins and 1 molecule of RNA (18S). The 60S subunit contains about 49 different proteins and 3 molecules of RNA (25S, 5.8S and 5S).

The protein resides in the cytoplasm. The sequence is that of Small ribosomal subunit protein eS1A from Trypanosoma cruzi (strain CL Brener).